A 343-amino-acid polypeptide reads, in one-letter code: Mesaconyl-CoA hydratase (343 aa).

A MaoC-like domain is found at 47–116 (SDEFARACGL…STVIGLKENS (70 aa)). Substrate contacts are provided by residues 60–63 (PVDE), 83–86 (VANL), and 94–96 (LKP).

The catalysed reaction is (2R,3S)-beta-methylmalyl-CoA = 2-methylfumaryl-CoA + H2O. Involved in the ethylmalonyl-CoA pathway for acetate assimilation. Catalyzes the reversible hydration of mesaconyl-CoA (2-methylfumaryl-CoA) to yield beta-methylmalyl-CoA ((2R,3S)-beta-methylmalyl-CoA). The polypeptide is Mesaconyl-CoA hydratase (mch) (Cereibacter sphaeroides (strain ATCC 17023 / DSM 158 / JCM 6121 / CCUG 31486 / LMG 2827 / NBRC 12203 / NCIMB 8253 / ATH 2.4.1.) (Rhodobacter sphaeroides)).